The primary structure comprises 582 residues: 2-succinyl-5-enolpyruvyl-6-hydroxy-3-cyclohexene-1-carboxylate synthase (582 aa).

The protein belongs to the TPP enzyme family. MenD subfamily. Homodimer. Requires Mg(2+) as cofactor. It depends on Mn(2+) as a cofactor. Thiamine diphosphate is required as a cofactor.

It catalyses the reaction isochorismate + 2-oxoglutarate + H(+) = 5-enolpyruvoyl-6-hydroxy-2-succinyl-cyclohex-3-ene-1-carboxylate + CO2. It participates in quinol/quinone metabolism; 1,4-dihydroxy-2-naphthoate biosynthesis; 1,4-dihydroxy-2-naphthoate from chorismate: step 2/7. It functions in the pathway cofactor biosynthesis; phylloquinone biosynthesis. Catalyzes the thiamine diphosphate-dependent decarboxylation of 2-oxoglutarate and the subsequent addition of the resulting succinic semialdehyde-thiamine pyrophosphate anion to isochorismate to yield 2-succinyl-5-enolpyruvyl-6-hydroxy-3-cyclohexene-1-carboxylate (SEPHCHC). The sequence is that of 2-succinyl-5-enolpyruvyl-6-hydroxy-3-cyclohexene-1-carboxylate synthase from Prochlorococcus marinus (strain MIT 9303).